A 371-amino-acid polypeptide reads, in one-letter code: Meiotic drive suppressor wtf18 (371 aa).

8 consecutive transmembrane segments (helical) span residues 86–106, 120–140, 153–173, 197–217, 233–253, 257–277, 287–307, and 321–341; these read FLLRLLISVLAVSVVFFTAWV, AFSVTIGITCPILFIATFCFF, VTVIFLAQCVKVTVIFLAQCV, DLVVTIWLAWVVICFILFGCV, CSISAALFFILLLVCIPIWTL, LFGLFQVLGVQSCVVIVTKGL, ATGYEIEASSLFVIGNFLFFY, and FIGNGIASFLGGLGNAFGGIG.

It belongs to the WTF family. In terms of assembly, homomer. Interacts with other proteins that exhibit high sequence similarity.

It localises to the spore membrane. The protein resides in the vacuole membrane. Acts as a suppressor component of the dual wtf meiotic drive system, and can suppress but not confer meiotic drive by compatible poisons. Wtf meiotic drive systems promote unequal transmission of alleles from the parental zygote to progeny spores by encoding a poison and an antidote from the same locus; the poison is trans-acting and forms toxic aggregates in all spores within an ascus, wherease the antidote is spore-specific and targets aggregates for degradation by the vacuole. Meiotic drive by wtf systems therefore lead to poisoning of all progeny that do not inherit the dual poison/antidote allele, or express a compatible antidote. This chain is Meiotic drive suppressor wtf18, found in Schizosaccharomyces kambucha (Fission yeast).